Reading from the N-terminus, the 251-residue chain is 5'-nucleotidase SurE (251 aa).

Residues Asp8, Asp9, Ser39, and Asn90 each contribute to the a divalent metal cation site.

This sequence belongs to the SurE nucleotidase family. A divalent metal cation is required as a cofactor.

Its subcellular location is the cytoplasm. The enzyme catalyses a ribonucleoside 5'-phosphate + H2O = a ribonucleoside + phosphate. In terms of biological role, nucleotidase that shows phosphatase activity on nucleoside 5'-monophosphates. The chain is 5'-nucleotidase SurE from Legionella pneumophila subsp. pneumophila (strain Philadelphia 1 / ATCC 33152 / DSM 7513).